A 119-amino-acid polypeptide reads, in one-letter code: Large ribosomal subunit protein uL18 (119 aa).

Belongs to the universal ribosomal protein uL18 family. In terms of assembly, part of the 50S ribosomal subunit; part of the 5S rRNA/L5/L18/L25 subcomplex. Contacts the 5S and 23S rRNAs.

In terms of biological role, this is one of the proteins that bind and probably mediate the attachment of the 5S RNA into the large ribosomal subunit, where it forms part of the central protuberance. In Borrelia hermsii (strain HS1 / DAH), this protein is Large ribosomal subunit protein uL18.